A 361-amino-acid chain; its full sequence is Histidinol-phosphate aminotransferase (361 aa).

K220 carries the N6-(pyridoxal phosphate)lysine modification.

Belongs to the class-II pyridoxal-phosphate-dependent aminotransferase family. Histidinol-phosphate aminotransferase subfamily. Homodimer. It depends on pyridoxal 5'-phosphate as a cofactor.

The catalysed reaction is L-histidinol phosphate + 2-oxoglutarate = 3-(imidazol-4-yl)-2-oxopropyl phosphate + L-glutamate. It functions in the pathway amino-acid biosynthesis; L-histidine biosynthesis; L-histidine from 5-phospho-alpha-D-ribose 1-diphosphate: step 7/9. This Syntrophus aciditrophicus (strain SB) protein is Histidinol-phosphate aminotransferase.